Reading from the N-terminus, the 326-residue chain is Pancreas transcription factor 1 subunit alpha (326 aa).

Positions 162–214 constitute a bHLH domain; sequence QLRQAANVRERRRMQSINDAFEGLRSHIPTLPYEKRLSKVDTLRLAIGYINFL. Residues 229–240 are compositionally biased toward gly residues; the sequence is TGGCGGPGGSRH. Disordered stretches follow at residues 229–249 and 304–326; these read TGGCGGPGGSRHLGGDSPGNQ and DPRKLNSKSFDNIENEPPFEFVS.

In terms of assembly, component of the pancreas transcription factor 1 complex (PTF1) which is composed of TCF3/p75, TCF12/p64 and PTF1A/p48. TCF3 is responsible for the nuclear import of the p48/p64 complex. Interacts with TCF3 and RBPSUH/RBP-Jkappa. Exocrine pancreas-specific. Expressed in azaserine-induced pancreatic tumors (at protein level). Expressed in AR42J cells but not in ARIP, DSL6A, or DSL6B cells. Down-regulation is associated with the change of an azaserine-induced acinar cell carcinoma to a ductal phenotype.

It localises to the nucleus. The protein resides in the cytoplasm. In terms of biological role, transcription factor implicated in the cell fate determination in various organs. Binds to the E-box consensus sequence 5'-CANNTG-3'. Plays a role in early and late pancreas development and differentiation. Important for determining whether cells allocated to the pancreatic buds continue towards pancreatic organogenesis or revert back to duodenal fates. May be involved in the maintenance of exocrine pancreas-specific gene expression including ELA1 and amylase. Required for the formation of pancreatic acinar and ductal cells. Plays an important role in cerebellar development. Directly regulated by FOXN4 and RORC during retinal development, FOXN4-PTF1A pathway plays a central role in directing the differentiation of retinal progenitors towards horizontal and amacrine fates. In Rattus norvegicus (Rat), this protein is Pancreas transcription factor 1 subunit alpha (Ptf1a).